The sequence spans 251 residues: MLYIVGIGPGPGYATERAIRAIEEADCVFYEDYTGPIDVETLRRAAKTPPIRLTRRDLEDESGRKVLECLREGKRAVLATAGDPMLATAHAALIAAARARGHPVEVVPGVSIICAAFSAACLSIYKLGGVATVTYPRGGVYSTRPYELAEANLARGLHTLLLLDVREDGSFMPPRDAAEVLMALEERERRGVFTPQRPAVVVHRLGWGGGVVVGPLGAVAKWDGEGPAVLIIPAQLGPVEKECLEAVAQRI.

S-adenosyl-L-methionine is bound by residues Asp83, Leu86, 111-112 (SI), Leu163, and Leu205.

The protein belongs to the diphthine synthase family. As to quaternary structure, homodimer.

It carries out the reaction 2-[(3S)-amino-3-carboxypropyl]-L-histidyl-[translation elongation factor 2] + 3 S-adenosyl-L-methionine = diphthine-[translation elongation factor 2] + 3 S-adenosyl-L-homocysteine + 3 H(+). The protein operates within protein modification; peptidyl-diphthamide biosynthesis. S-adenosyl-L-methionine-dependent methyltransferase that catalyzes the trimethylation of the amino group of the modified target histidine residue in translation elongation factor 2 (EF-2), to form an intermediate called diphthine. The three successive methylation reactions represent the second step of diphthamide biosynthesis. This Pyrobaculum calidifontis (strain DSM 21063 / JCM 11548 / VA1) protein is Diphthine synthase.